Reading from the N-terminus, the 467-residue chain is 3-isopropylmalate dehydratase large subunit (467 aa).

Cys-348, Cys-408, and Cys-411 together coordinate [4Fe-4S] cluster. Residues 417–445 (DQLTPGERSASTSNRNFEGRQGKGGRTHL) are disordered.

It belongs to the aconitase/IPM isomerase family. LeuC type 1 subfamily. Heterodimer of LeuC and LeuD. [4Fe-4S] cluster is required as a cofactor.

The catalysed reaction is (2R,3S)-3-isopropylmalate = (2S)-2-isopropylmalate. Its pathway is amino-acid biosynthesis; L-leucine biosynthesis; L-leucine from 3-methyl-2-oxobutanoate: step 2/4. Catalyzes the isomerization between 2-isopropylmalate and 3-isopropylmalate, via the formation of 2-isopropylmaleate. This Saccharopolyspora erythraea (strain ATCC 11635 / DSM 40517 / JCM 4748 / NBRC 13426 / NCIMB 8594 / NRRL 2338) protein is 3-isopropylmalate dehydratase large subunit.